The sequence spans 207 residues: GTP-binding protein RHO1 (207 aa).

GTP is bound at residue 18–25 (GDGACGKT). The Effector region signature appears at 40 to 48 (YVPTVFDNY). Residues 65-69 (DTAGQ) and 123-126 (CKAD) each bind GTP. The interval 187-207 (GKQGKSKAKSDKKKKKKCVVL) is disordered. The segment covering 190 to 207 (GKSKAKSDKKKKKKCVVL) has biased composition (basic residues). Position 204 is a cysteine methyl ester (Cys204). The S-geranylgeranyl cysteine moiety is linked to residue Cys204. Positions 205-207 (VVL) are cleaved as a propeptide — removed in mature form.

This sequence belongs to the small GTPase superfamily. Rho family.

It localises to the cell membrane. Functionally, involved in the regulation of actin polarization. Rho proteins are required for distinct steps during polarized hyphal growth of A.gossypii. This Eremothecium gossypii (strain ATCC 10895 / CBS 109.51 / FGSC 9923 / NRRL Y-1056) (Yeast) protein is GTP-binding protein RHO1 (RHO1).